The sequence spans 178 residues: N-alpha-acetyltransferase 20 (178 aa).

The N-acetyltransferase domain occupies 2 to 157 (TTLRAFTCDD…DAYDMRKALS (156 aa)). A disordered region spans residues 159–178 (DTEKKSIVPLPHPVRPEDIE).

Belongs to the acetyltransferase family. ARD1 subfamily. As to quaternary structure, component of the N-terminal acetyltransferase B (NatB) complex which is composed of naa20 and naa25.

The protein resides in the cytoplasm. It localises to the nucleus. The catalysed reaction is N-terminal L-methionyl-L-asparaginyl-[protein] + acetyl-CoA = N-terminal N(alpha)-acetyl-L-methionyl-L-asparaginyl-[protein] + CoA + H(+). The enzyme catalyses N-terminal L-methionyl-L-glutaminyl-[protein] + acetyl-CoA = N-terminal N(alpha)-acetyl-L-methionyl-L-glutaminyl-[protein] + CoA + H(+). It catalyses the reaction N-terminal L-methionyl-L-aspartyl-[protein] + acetyl-CoA = N-terminal N(alpha)-acetyl-L-methionyl-L-aspartyl-[protein] + CoA + H(+). It carries out the reaction N-terminal L-methionyl-L-glutamyl-[protein] + acetyl-CoA = N-terminal N(alpha)-acetyl-L-methionyl-L-glutamyl-[protein] + CoA + H(+). Functionally, catalytic subunit of the NatB complex which catalyzes acetylation of the N-terminal methionine residues of peptides beginning with Met-Asp, Met-Glu, Met-Asn and Met-Gln. Proteins with cell cycle functions are overrepresented in the pool of NatB substrates. Required for maintaining the structure and function of actomyosin fibers and for proper cellular migration. This is N-alpha-acetyltransferase 20 (naa20) from Xenopus laevis (African clawed frog).